The primary structure comprises 804 residues: Exocyst complex component 6 (804 aa).

The protein belongs to the SEC15 family. As to quaternary structure, the exocyst complex is composed of EXOC1, EXOC2, EXOC3, EXOC4, EXOC5, EXOC6, EXOC7 and EXOC8. Interacts with CNTRL. Interacts with RAB11A in a GTP-dependent manner.

The protein resides in the cytoplasm. Its subcellular location is the perinuclear region. It localises to the cell projection. It is found in the growth cone. The protein localises to the midbody. The protein resides in the midbody ring. Functionally, component of the exocyst complex involved in the docking of exocytic vesicles with fusion sites on the plasma membrane. Together with RAB11A, RAB3IP, RAB8A, PARD3, PRKCI, ANXA2, CDC42 and DNMBP promotes transcytosis of PODXL to the apical membrane initiation sites (AMIS), apical surface formation and lumenogenesis. The polypeptide is Exocyst complex component 6 (EXOC6) (Homo sapiens (Human)).